A 131-amino-acid chain; its full sequence is MKKTTLLNQALSEVVAGMGHGDLLVIGDYGLPCPKGVRRIDLALRPGIPAFLDVVETILAELQVEAAVVARETAERNPAVQEGLTRLLGGVPVTTVSHEELKEISARAVALVRTGECTPYANVILRAGVTF.

Histidine 20 acts as the Proton donor in catalysis. Substrate-binding positions include aspartate 28, histidine 98, and tyrosine 120–asparagine 122.

This sequence belongs to the RbsD / FucU family. RbsD subfamily. Homodecamer.

It is found in the cytoplasm. It catalyses the reaction beta-D-ribopyranose = beta-D-ribofuranose. It functions in the pathway carbohydrate metabolism; D-ribose degradation; D-ribose 5-phosphate from beta-D-ribopyranose: step 1/2. Its function is as follows. Catalyzes the interconversion of beta-pyran and beta-furan forms of D-ribose. This Symbiobacterium thermophilum (strain DSM 24528 / JCM 14929 / IAM 14863 / T) protein is D-ribose pyranase.